A 156-amino-acid polypeptide reads, in one-letter code: ADP-ribose 1''-phosphate phosphatase (156 aa).

Residues 1-156 (MIQYIKGDLF…DNLHFNVYVI (156 aa)) enclose the Macro domain. Substrate is bound by residues 7-9 (GDL), 25-27 (ACN), 32-37 (WGGGIA), and 127-133 (INAGIFG).

The protein belongs to the POA1 family.

The catalysed reaction is ADP-alpha-D-ribose 1''-phosphate + H2O = ADP-D-ribose + phosphate. Functionally, highly specific phosphatase involved in the metabolism of ADP-ribose 1''-phosphate (Appr1p) which is produced as a consequence of tRNA splicing. The protein is ADP-ribose 1''-phosphate phosphatase (POA1) of Candida albicans (strain SC5314 / ATCC MYA-2876) (Yeast).